Here is a 427-residue protein sequence, read N- to C-terminus: Enolase (427 aa).

(2R)-2-phosphoglycerate is bound at residue Gln163. Glu205 functions as the Proton donor in the catalytic mechanism. Asp242, Glu285, and Asp312 together coordinate Mg(2+). Positions 337, 366, 367, and 388 each coordinate (2R)-2-phosphoglycerate. Catalysis depends on Lys337, which acts as the Proton acceptor.

It belongs to the enolase family. Mg(2+) serves as cofactor.

Its subcellular location is the cytoplasm. It localises to the secreted. The protein localises to the cell surface. It catalyses the reaction (2R)-2-phosphoglycerate = phosphoenolpyruvate + H2O. It participates in carbohydrate degradation; glycolysis; pyruvate from D-glyceraldehyde 3-phosphate: step 4/5. In terms of biological role, catalyzes the reversible conversion of 2-phosphoglycerate (2-PG) into phosphoenolpyruvate (PEP). It is essential for the degradation of carbohydrates via glycolysis. This chain is Enolase, found in Rhodopseudomonas palustris (strain ATCC BAA-98 / CGA009).